The following is an 80-amino-acid chain: RNA-binding protein Hfq (80 aa).

The Sm domain occupies 10-69; sequence DPFLNLLRKEHVPVSIYLVNGIKLQGHIESFDQYVVLLRNTVTQMVYKHAISTVVPGRPV.

The protein belongs to the Hfq family. As to quaternary structure, homohexamer.

Functionally, RNA chaperone that binds small regulatory RNA (sRNAs) and mRNAs to facilitate mRNA translational regulation in response to envelope stress, environmental stress and changes in metabolite concentrations. Also binds with high specificity to tRNAs. The sequence is that of RNA-binding protein Hfq from Leptothrix cholodnii (strain ATCC 51168 / LMG 8142 / SP-6) (Leptothrix discophora (strain SP-6)).